We begin with the raw amino-acid sequence, 189 residues long: MSNEASPAFESVLTALKAEKVIAYPTEAVFGLGCDPDSEKAVNELLILKKRPWQKGLILIADNYEQLQPYLDDKLLTEEQKKAMFACWPGPVTWVIPAKFSAPKWLTGQFATLAVRVSDHPLVKQLCTFYGKPLVSTSANLNGLEPCRTAEEVRQQFGDKLPILNGDVGGRKNPSEIRDALTGELYRQG.

A YrdC-like domain is found at 6 to 189; the sequence is SPAFESVLTA…ALTGELYRQG (184 aa).

The protein belongs to the SUA5 family. TsaC subfamily.

It is found in the cytoplasm. The enzyme catalyses L-threonine + hydrogencarbonate + ATP = L-threonylcarbamoyladenylate + diphosphate + H2O. Its function is as follows. Required for the formation of a threonylcarbamoyl group on adenosine at position 37 (t(6)A37) in tRNAs that read codons beginning with adenine. Catalyzes the conversion of L-threonine, HCO(3)(-)/CO(2) and ATP to give threonylcarbamoyl-AMP (TC-AMP) as the acyladenylate intermediate, with the release of diphosphate. The protein is Threonylcarbamoyl-AMP synthase of Photorhabdus laumondii subsp. laumondii (strain DSM 15139 / CIP 105565 / TT01) (Photorhabdus luminescens subsp. laumondii).